A 585-amino-acid polypeptide reads, in one-letter code: Pyruvate kinase (585 aa).

R32 is a binding site for substrate. K(+) contacts are provided by N34, S36, D66, and T67. 34–37 lines the ATP pocket; sequence NFSH. ATP-binding residues include R73 and K156. E221 serves as a coordination point for Mg(2+). Substrate-binding residues include G244, D245, and T277. Residue D245 participates in Mg(2+) binding.

Belongs to the pyruvate kinase family. This sequence in the C-terminal section; belongs to the PEP-utilizing enzyme family. Requires Mg(2+) as cofactor. It depends on K(+) as a cofactor.

The catalysed reaction is pyruvate + ATP = phosphoenolpyruvate + ADP + H(+). It participates in carbohydrate degradation; glycolysis; pyruvate from D-glyceraldehyde 3-phosphate: step 5/5. This chain is Pyruvate kinase (pyk), found in Staphylococcus epidermidis (strain ATCC 35984 / DSM 28319 / BCRC 17069 / CCUG 31568 / BM 3577 / RP62A).